We begin with the raw amino-acid sequence, 435 residues long: Ribosomal protein uS12 methylthiotransferase RimO (435 aa).

The MTTase N-terminal domain occupies 3-113 (HKVGFVSLGC…VVNAVHQHLP (111 aa)). Residues Cys-12, Cys-48, Cys-77, Cys-144, Cys-148, and Cys-151 each coordinate [4Fe-4S] cluster. A Radical SAM core domain is found at 130–367 (LTPRHYAYLK…MQVQAEISRN (238 aa)). The 66-residue stretch at 370-435 (KNKIGSTQTV…DDYDLYASLV (66 aa)) folds into the TRAM domain.

It belongs to the methylthiotransferase family. RimO subfamily. The cofactor is [4Fe-4S] cluster.

The protein localises to the cytoplasm. It catalyses the reaction L-aspartate(89)-[ribosomal protein uS12]-hydrogen + (sulfur carrier)-SH + AH2 + 2 S-adenosyl-L-methionine = 3-methylsulfanyl-L-aspartate(89)-[ribosomal protein uS12]-hydrogen + (sulfur carrier)-H + 5'-deoxyadenosine + L-methionine + A + S-adenosyl-L-homocysteine + 2 H(+). Catalyzes the methylthiolation of an aspartic acid residue of ribosomal protein uS12. In Legionella pneumophila (strain Lens), this protein is Ribosomal protein uS12 methylthiotransferase RimO.